The primary structure comprises 70 residues: DNA gyrase inhibitor YacG (70 aa).

Zn(2+) is bound by residues Cys20, Cys23, Cys35, and Cys39.

It belongs to the DNA gyrase inhibitor YacG family. Interacts with GyrB. Requires Zn(2+) as cofactor.

Inhibits all the catalytic activities of DNA gyrase by preventing its interaction with DNA. Acts by binding directly to the C-terminal domain of GyrB, which probably disrupts DNA binding by the gyrase. This chain is DNA gyrase inhibitor YacG, found in Rhizobium etli (strain ATCC 51251 / DSM 11541 / JCM 21823 / NBRC 15573 / CFN 42).